Consider the following 282-residue polypeptide: UPF0761 membrane protein HAPS_1376 (282 aa).

The next 6 membrane-spanning stretches (helical) occupy residues 32–52 (LLSL…LPIF), 89–109 (MGII…SSID), 124–144 (VILS…FAGA), 170–190 (LLKF…YLIV), 202–222 (VGAL…IWYI), and 234–254 (ALAT…VVLL).

This sequence belongs to the UPF0761 family.

It is found in the cell inner membrane. This Glaesserella parasuis serovar 5 (strain SH0165) (Haemophilus parasuis) protein is UPF0761 membrane protein HAPS_1376.